The following is a 304-amino-acid chain: Glutaminase (304 aa).

Residues serine 63, asparagine 114, glutamate 158, asparagine 165, tyrosine 189, tyrosine 240, and valine 258 each contribute to the substrate site.

This sequence belongs to the glutaminase family. Homotetramer.

It carries out the reaction L-glutamine + H2O = L-glutamate + NH4(+). In Shewanella baltica (strain OS185), this protein is Glutaminase.